A 70-amino-acid polypeptide reads, in one-letter code: uncharacterized protein (70 aa).

Belongs to the opacity porin family.

This is an uncharacterized protein from Haemophilus influenzae (strain ATCC 51907 / DSM 11121 / KW20 / Rd).